The sequence spans 377 residues: uncharacterized protein (377 aa).

Polar residues-rich tracts occupy residues 1–11 and 31–43; these read MSSIQGTSGSS and PSGQTISFSAVGK. Disordered regions lie at residues 1 to 43, 109 to 141, and 328 to 377; these read MSSI…AVGK, SSEEQLESPGVRNKSALKGTNRSNSHREEIARN, and SSSP…RGFQ. The span at 334–345 shows a compositional bias: basic and acidic residues; the sequence is EDPRSLRDRLRD.

It belongs to the chlamydial CPn_0499/CT_392/TC_0671 family.

This is an uncharacterized protein from Chlamydia trachomatis serovar D (strain ATCC VR-885 / DSM 19411 / UW-3/Cx).